We begin with the raw amino-acid sequence, 513 residues long: ATP synthase subunit alpha (513 aa).

169–176 provides a ligand contact to ATP; sequence GDRQCGKT.

Belongs to the ATPase alpha/beta chains family. As to quaternary structure, F-type ATPases have 2 components, CF(1) - the catalytic core - and CF(0) - the membrane proton channel. CF(1) has five subunits: alpha(3), beta(3), gamma(1), delta(1), epsilon(1). CF(0) has three main subunits: a(1), b(2) and c(9-12). The alpha and beta chains form an alternating ring which encloses part of the gamma chain. CF(1) is attached to CF(0) by a central stalk formed by the gamma and epsilon chains, while a peripheral stalk is formed by the delta and b chains.

The protein localises to the cell inner membrane. The catalysed reaction is ATP + H2O + 4 H(+)(in) = ADP + phosphate + 5 H(+)(out). Functionally, produces ATP from ADP in the presence of a proton gradient across the membrane. The alpha chain is a regulatory subunit. This Burkholderia orbicola (strain AU 1054) protein is ATP synthase subunit alpha.